A 209-amino-acid chain; its full sequence is Superoxide dismutase [Mn/Fe] (209 aa).

Residues His38, His90, Asp172, and His176 each contribute to the Fe(3+) site. His38, His90, Asp172, and His176 together coordinate Mn(2+).

This sequence belongs to the iron/manganese superoxide dismutase family. Requires Mn(2+) as cofactor. It depends on Fe(3+) as a cofactor.

It catalyses the reaction 2 superoxide + 2 H(+) = H2O2 + O2. Functionally, destroys superoxide anion radicals which are normally produced within the cells and which are toxic to biological systems. Catalyzes the dismutation of superoxide anion radicals into O2 and H2O2 by successive reduction and oxidation of the transition metal ion at the active site. In Rickettsia conorii (strain ATCC VR-613 / Malish 7), this protein is Superoxide dismutase [Mn/Fe] (sodB).